Here is a 180-residue protein sequence, read N- to C-terminus: UPF0227 protein YcfP (180 aa).

This sequence belongs to the UPF0227 family.

This is UPF0227 protein YcfP from Escherichia coli O9:H4 (strain HS).